A 342-amino-acid chain; its full sequence is Methionyl-tRNA formyltransferase (342 aa).

Residue 108–111 (SLLP) coordinates (6S)-5,6,7,8-tetrahydrofolate.

It belongs to the Fmt family.

It carries out the reaction L-methionyl-tRNA(fMet) + (6R)-10-formyltetrahydrofolate = N-formyl-L-methionyl-tRNA(fMet) + (6S)-5,6,7,8-tetrahydrofolate + H(+). Functionally, attaches a formyl group to the free amino group of methionyl-tRNA(fMet). The formyl group appears to play a dual role in the initiator identity of N-formylmethionyl-tRNA by promoting its recognition by IF2 and preventing the misappropriation of this tRNA by the elongation apparatus. The polypeptide is Methionyl-tRNA formyltransferase (Prochlorococcus marinus (strain MIT 9303)).